The chain runs to 548 residues: Probable malate:quinone oxidoreductase (548 aa).

The tract at residues 521–548 is disordered; that stretch reads DKPQAADSTPKPQLKPQPVQKEVADIAL. Over residues 530 to 541 the composition is skewed to low complexity; sequence PKPQLKPQPVQK.

It belongs to the MQO family. FAD is required as a cofactor.

The catalysed reaction is (S)-malate + a quinone = a quinol + oxaloacetate. The protein operates within carbohydrate metabolism; tricarboxylic acid cycle; oxaloacetate from (S)-malate (quinone route): step 1/1. The sequence is that of Probable malate:quinone oxidoreductase from Escherichia coli (strain 55989 / EAEC).